Reading from the N-terminus, the 145-residue chain is Early nodulin-like protein 21 (145 aa).

Positions 1 to 17 are cleaved as a signal peptide; the sequence is MFLWLVIVLTISASVSS. The region spanning 18 to 116 is the Phytocyanin domain; the sequence is YEHKLNWVVP…GQKMIVEVIS (99 aa). 2 N-linked (GlcNAc...) asparagine glycosylation sites follow: N30 and N71. The cysteines at positions 70 and 104 are disulfide-linked. Residue S116 is the site of GPI-anchor amidated serine attachment. Positions 117 to 145 are cleaved as a propeptide — removed in mature form; sequence RDHTTTSAAPPAAFAVLLCFFSLSLYFVA.

This sequence belongs to the early nodulin-like (ENODL) family. As to expression, mostly expressed in leaves and flowers, and, to a lower extent, in roots and stems, but barely in seedlings and seeds.

It localises to the cell membrane. May act as a carbohydrate transporter. The protein is Early nodulin-like protein 21 of Arabidopsis thaliana (Mouse-ear cress).